The sequence spans 708 residues: Alpha-galactosidase (708 aa).

The active-site Nucleophile is the aspartate 441. Aspartate 505 functions as the Proton donor in the catalytic mechanism.

The protein belongs to the glycosyl hydrolase 36 family. Homotetramer.

The catalysed reaction is Hydrolysis of terminal, non-reducing alpha-D-galactose residues in alpha-D-galactosides, including galactose oligosaccharides, galactomannans and galactolipids.. This is Alpha-galactosidase (rafA) from Escherichia coli.